The primary structure comprises 687 residues: DNA-directed RNA polymerase subunit beta' (687 aa).

Cys-69, Cys-71, Cys-87, and Cys-90 together coordinate Zn(2+). Mg(2+) contacts are provided by Asp-491, Asp-493, and Asp-495.

Belongs to the RNA polymerase beta' chain family. RpoC1 subfamily. As to quaternary structure, in plastids the minimal PEP RNA polymerase catalytic core is composed of four subunits: alpha, beta, beta', and beta''. When a (nuclear-encoded) sigma factor is associated with the core the holoenzyme is formed, which can initiate transcription. It depends on Mg(2+) as a cofactor. The cofactor is Zn(2+).

The protein localises to the plastid. It is found in the chloroplast. It catalyses the reaction RNA(n) + a ribonucleoside 5'-triphosphate = RNA(n+1) + diphosphate. DNA-dependent RNA polymerase catalyzes the transcription of DNA into RNA using the four ribonucleoside triphosphates as substrates. In Glycine max (Soybean), this protein is DNA-directed RNA polymerase subunit beta'.